We begin with the raw amino-acid sequence, 223 residues long: Ubiquitin carboxyl-terminal hydrolase isozyme L1 (223 aa).

Position 1 is an N-acetylmethionine (M1). Positions 2-221 (QLKPMEINPE…VRFSAVALCK (220 aa)) constitute a UCH catalytic domain. The interaction with ubiquitin stretch occupies residues 5 to 10 (PMEINP). The active-site Nucleophile is the C90. Residue S125 is modified to Phosphoserine. The active-site Proton donor is H161. The interaction with ubiquitin stretch occupies residues 211 to 216 (EVRFSA). The S-farnesyl cysteine moiety is linked to residue C220. The propeptide at 221–223 (KAA) is removed in mature form.

It belongs to the peptidase C12 family. As to quaternary structure, monomer. Homodimer. Interacts with COPS5 and SNCA. In terms of processing, O-glycosylated. As to expression, expressed in the placenta at all stages of pregnancy. Expression increases as pregnancy progresses.

The protein resides in the cytoplasm. It localises to the endoplasmic reticulum membrane. The protein localises to the nucleus. The catalysed reaction is Thiol-dependent hydrolysis of ester, thioester, amide, peptide and isopeptide bonds formed by the C-terminal Gly of ubiquitin (a 76-residue protein attached to proteins as an intracellular targeting signal).. Its function is as follows. Ubiquitin-protein hydrolase involved both in the processing of ubiquitin precursors and of ubiquitinated proteins. This enzyme is a thiol protease that recognizes and hydrolyzes a peptide bond at the C-terminal glycine of ubiquitin. Also binds to free monoubiquitin and may prevent its degradation in lysosomes. The homodimer may have ATP-independent ubiquitin ligase activity. The polypeptide is Ubiquitin carboxyl-terminal hydrolase isozyme L1 (UCHL1) (Macaca fascicularis (Crab-eating macaque)).